Consider the following 557-residue polypeptide: Phosphoacetylglucosamine mutase (557 aa).

The active-site Phosphoserine intermediate is the serine 67. Mg(2+) contacts are provided by serine 67, aspartate 298, aspartate 300, and aspartate 302. Serine 67 is subject to Phosphoserine. Substrate is bound by residues 395–397 (EAN), 522–526 (RASGT), and arginine 531.

It belongs to the phosphohexose mutase family. Mg(2+) is required as a cofactor.

The protein localises to the cytoplasm. It is found in the nucleus. It catalyses the reaction N-acetyl-alpha-D-glucosamine 1-phosphate = N-acetyl-D-glucosamine 6-phosphate. It functions in the pathway nucleotide-sugar biosynthesis; UDP-N-acetyl-alpha-D-glucosamine biosynthesis; N-acetyl-alpha-D-glucosamine 1-phosphate from alpha-D-glucosamine 6-phosphate (route I): step 2/2. Its function is as follows. Catalyzes the conversion of GlcNAc-6-P into GlcNAc-1-P during the synthesis of uridine diphosphate/UDP-GlcNAc, which is a biosynthetic precursor of chitin and also supplies the amino sugars for N-linked oligosaccharides of glycoproteins. Also has phosphoglucomutase activity. The chain is Phosphoacetylglucosamine mutase from Saccharomyces cerevisiae (strain ATCC 204508 / S288c) (Baker's yeast).